Consider the following 194-residue polypeptide: ATP-dependent Clp protease proteolytic subunit (194 aa).

The Nucleophile role is filled by S98. H123 is an active-site residue.

The protein belongs to the peptidase S14 family. Fourteen ClpP subunits assemble into 2 heptameric rings which stack back to back to give a disk-like structure with a central cavity, resembling the structure of eukaryotic proteasomes.

It localises to the cytoplasm. The catalysed reaction is Hydrolysis of proteins to small peptides in the presence of ATP and magnesium. alpha-casein is the usual test substrate. In the absence of ATP, only oligopeptides shorter than five residues are hydrolyzed (such as succinyl-Leu-Tyr-|-NHMec, and Leu-Tyr-Leu-|-Tyr-Trp, in which cleavage of the -Tyr-|-Leu- and -Tyr-|-Trp bonds also occurs).. Functionally, cleaves peptides in various proteins in a process that requires ATP hydrolysis. Has a chymotrypsin-like activity. Plays a major role in the degradation of misfolded proteins. In Staphylococcus carnosus (strain TM300), this protein is ATP-dependent Clp protease proteolytic subunit.